The following is a 312-amino-acid chain: MDAEDGFDPTLLKKKKKKKTTFDLDAALGLEDDTKKEDPQDEASAEGGAAAEEDNLDLESFGKKKKKKKKPFNMDEIEAAIPSFGGDDVAASEEPEEEEINLDMDFSMAKKKKKSKKKELDELFADQADDDKSEDKENDEDNSSTWFGSDRDYTYDELLKRVFEIILDKNPDMAAGRKPKFVMRPPQVLRVGTKKTSFANFMDIAKTLHRLPKHLLDFLLAELGTSGSMDGNQQLIIKGRFQPKQIENVLRRYIKEYVTCHTCRSPETILQKDTRLFFLQCESCGSRCSVASIKSGFQAVTGKRAAIRAKTT.

Disordered stretches follow at residues 26–104 (AALG…NLDM) and 125–146 (ADQADDDKSEDKENDEDNSSTW). Position 44 is a phosphoserine (Ser44). 2 stretches are compositionally biased toward acidic residues: residues 90–102 (AASEEPEEEEINL) and 125–142 (ADQADDDKSEDKENDEDN). Position 133 is a phosphoserine (Ser133). Residue Thr145 is modified to Phosphothreonine. The C4-type zinc finger occupies 260–284 (CHTCRSPETILQKDTRLFFLQCESC).

It belongs to the eIF-2-beta/eIF-5 family. As to quaternary structure, eukaryotic translation initiation factor 2 eIF2 is a heterotrimeric complex composed of an alpha, a beta and a gamma subunit.

The protein localises to the cytoplasm. It is found in the cytosol. In terms of biological role, component of the eIF2 complex that functions in the early steps of protein synthesis by forming a ternary complex with GTP and initiator tRNA. This complex binds to a 40S ribosomal subunit, followed by mRNA binding to form a 43S pre-initiation complex (43S PIC). Junction of the 60S ribosomal subunit to form the 80S initiation complex is preceded by hydrolysis of the GTP bound to eIF2 and release of an eIF2-GDP binary complex. In order for eIF2 to recycle and catalyze another round of initiation, the GDP bound to eIF2 must exchange with GTP by way of a reaction catalyzed by eIF2B. This Drosophila melanogaster (Fruit fly) protein is Eukaryotic translation initiation factor 2 subunit 2.